A 341-amino-acid polypeptide reads, in one-letter code: Uroporphyrinogen decarboxylase (341 aa).

Substrate is bound by residues 23–27 (RQAGR), phenylalanine 42, aspartate 73, tyrosine 148, serine 203, and histidine 318.

The protein belongs to the uroporphyrinogen decarboxylase family. As to quaternary structure, homodimer.

The protein resides in the cytoplasm. The enzyme catalyses uroporphyrinogen III + 4 H(+) = coproporphyrinogen III + 4 CO2. It participates in porphyrin-containing compound metabolism; protoporphyrin-IX biosynthesis; coproporphyrinogen-III from 5-aminolevulinate: step 4/4. Its function is as follows. Catalyzes the decarboxylation of four acetate groups of uroporphyrinogen-III to yield coproporphyrinogen-III. The protein is Uroporphyrinogen decarboxylase of Brucella melitensis biotype 1 (strain ATCC 23456 / CCUG 17765 / NCTC 10094 / 16M).